The sequence spans 389 residues: Trans-2-enoyl-CoA reductase [NADH] (389 aa).

Residues 47–52, 73–74, 110–111, and 138–139 contribute to the NAD(+) site; these read GASTGY, FE, DA, and LA. Position 224 (Y224) interacts with substrate. Catalysis depends on Y234, which acts as the Proton donor. NAD(+)-binding positions include K243 and 272 to 274; that span reads LVT.

This sequence belongs to the TER reductase family. In terms of assembly, monomer.

It carries out the reaction a 2,3-saturated acyl-CoA + NAD(+) = a (2E)-enoyl-CoA + NADH + H(+). It functions in the pathway lipid metabolism; fatty acid biosynthesis. Functionally, involved in the fatty acid synthesis (FAS II). Catalyzes the reduction of a carbon-carbon double bond in an enoyl moiety that is covalently linked to a coenzyme A (CoA). The protein is Trans-2-enoyl-CoA reductase [NADH] of Clostridium perfringens (strain 13 / Type A).